Consider the following 434-residue polypeptide: Fc receptor-like protein 6 (434 aa).

Positions M1 to W19 are cleaved as a signal peptide. Ig-like C2-type domains follow at residues L20–T95, P111–E197, and P207–S293. Over L20–W307 the chain is Extracellular. Disulfide bonds link C39–C83, C132–C180, and C228–C276. The N-linked (GlcNAc...) asparagine glycan is linked to N65. N-linked (GlcNAc...) asparagine glycosylation occurs at N273. A helical membrane pass occupies residues L308–V328. The Cytoplasmic segment spans residues Y329–C434. Positions V369–V374 match the ITIM motif motif. Residue Y371 is modified to Phosphotyrosine.

As to quaternary structure, interacts (tyrosine phosphorylated) with PTPN11. Interacts (tyrosine phosphorylated) with PTPN6, INPP5D, INPPL1 and GRB2. Interacts with class II MHC HLA-DR when the alpha chain is associated with a beta-1, beta-4 or a beta-5 but not a beta-3 chain. In terms of processing, phosphorylated on Tyr residues. Tyrosine phosphorylation induces association with phosphatase PTPN11, PTPN6, INPP5D, INPPL1 and GRB2. Expressed by cytolytic cells including NK cells, effector and effector-memory CD8(+) T-cells, and a subset of NKT cells (at protein level). Also expressed in gamma delta T cells and in a rare subset of effector CD4(+) T-cells (at protein level). Expressed in spleen, skin, peripheral blood leukocytes, liver, lung, bone marrow, small intestine and placenta. Expression among T-cells is greatly expanded in HIV-1 infected individuals, and includes not only effector and effector-memory CD8(+) T-cells but also populations of CD4(+) T-cells. Expression among CD8(+) T-cells and NK cells is expanded in individuals with chronic lymphocytic leukemia (CLL) but is reduced in PBMCs from patients with acute (AML), chronic myeloid leukemia (CML) and non-Hodgkin's lymphoma. Expression is higher in PBMCs and/or CD3(+) cells of patients with autoimmune diseases, such as rheumatoid arthritis (RA), systemic lupus erythematosus (SLE) and idiopathic thrombocytopenia purpura (ITP). In contrast, expression in CD3(+) cells from patients with lupus anticoagulans (LA) is higher.

It localises to the cell membrane. Acts as a MHC class II receptor. When stimulated on its own, does not play a role in cytokine production or the release of cytotoxic granules by NK cells and cytotoxic CD8(+) T cells. Does not act as an Fc receptor. This is Fc receptor-like protein 6 (FCRL6) from Homo sapiens (Human).